Consider the following 144-residue polypeptide: Universal stress protein A homolog 1 (144 aa).

Belongs to the universal stress protein A family. As to quaternary structure, homodimer.

It localises to the cytoplasm. Involved in stress response. This Coxiella burnetii (strain RSA 493 / Nine Mile phase I) protein is Universal stress protein A homolog 1 (uspA1).